Reading from the N-terminus, the 241-residue chain is Outer membrane protein A (241 aa).

The next 5 membrane-spanning stretches (beta stranded) occupy residues 1–8 (LTAKLSYP), 13–21 (LDIYTRLGG), 46–55 (PVFAGGVEYA), 60–67 (IATRLEYQ), and 86–94 (MLSVGVSYR). 4 repeat units span residues 105 to 106 (AP), 107 to 108 (AP), 109 to 110 (AP), and 111 to 112 (AP). The segment at 105–112 (APAPAPAP) is 4 X 2 AA tandem repeats of A-P. The region spanning 114 to 241 (VQTKHFTLKS…RRVEIEVKGV (128 aa)) is the OmpA-like domain. Cys-215 and Cys-227 are disulfide-bonded.

The protein belongs to the outer membrane OOP (TC 1.B.6) superfamily. OmpA family. Monomer and homodimer.

It localises to the cell outer membrane. With TolR probably plays a role in maintaining the position of the peptidoglycan cell wall in the periplasm. Acts as a porin with low permeability that allows slow penetration of small solutes; an internal gate slows down solute passage. The polypeptide is Outer membrane protein A (Shimwellia blattae (Escherichia blattae)).